The chain runs to 453 residues: MVASSFAVLRASRLCQQDWKSWARLFVPPPLSTGGRTTWARTNATLSVEPEGRSCWDEPLSIAVRGLAPEQPVTLRSALRDEKGALFRAHARYRADAGGELNLARAPALGGSFSGLEPMGLLWAMEPERPLWRLIKRDVQTPFLVELEVLDGHEPDGGQRLAQAVHERHFLAPGVRRVPVREGRVRATLFLPPEPGPFPGIIDLFGVGGGLLEYRASLLAGKGFAVMALAYYNYDDLPKSIETMHMEYFEEAVNYLRSHPEVKGPGIGLLGISKGGELGLAMASFLKGITAAVVINGSVAAVGNTISYKDETIPPVSLLRNQVKMTKDGLLDVVEALQSPLVDKKSFIPVERSDTTFLFLVGQDDHNWKSEFYADEISKRLQAHGKEKPQIICYPAAGHYIEPPYFPLCSAGMHLLVGANITFGGEPRAHAVAQVDAWQQLQTFFHKQLGSKS.

The transit peptide at 1–42 directs the protein to the mitochondrion; that stretch reads MVASSFAVLRASRLCQQDWKSWARLFVPPPLSTGGRTTWART. An N6-acetyllysine modification is found at K83. Residues S273, D365, and H399 each act as charge relay system in the active site. K447 carries the post-translational modification N6-succinyllysine.

This sequence belongs to the C/M/P thioester hydrolase family. Monomer. As to expression, highly expressed in brown and white adipose tissue, muscle, heart, kidney, lung, adrenal gland and spleen; weakly expressed in intestine, testis and brain.

Its subcellular location is the mitochondrion matrix. It carries out the reaction hexadecanoyl-CoA + H2O = hexadecanoate + CoA + H(+). The catalysed reaction is tetradecanoyl-CoA + H2O = tetradecanoate + CoA + H(+). The enzyme catalyses octadecanoyl-CoA + H2O = octadecanoate + CoA + H(+). It catalyses the reaction eicosanoyl-CoA + H2O = eicosanoate + CoA + H(+). It carries out the reaction decanoyl-CoA + H2O = decanoate + CoA + H(+). The catalysed reaction is dodecanoyl-CoA + H2O = dodecanoate + CoA + H(+). The enzyme catalyses (9Z)-octadecenoyl-CoA + H2O = (9Z)-octadecenoate + CoA + H(+). It catalyses the reaction (9Z)-hexadecenoyl-CoA + H2O = (9Z)-hexadecenoate + CoA + H(+). It carries out the reaction (9E)-octadecenoyl-CoA + H2O = (9E)-octadecenoate + CoA + H(+). The catalysed reaction is (9Z,12Z)-octadecadienoyl-CoA + H2O = (9Z,12Z)-octadecadienoate + CoA + H(+). Its pathway is lipid metabolism; fatty acid metabolism. Functionally, catalyzes the hydrolysis of acyl-CoAs into free fatty acids and coenzyme A (CoASH), regulating their respective intracellular levels. Displays higher activity toward long chain acyl CoAs (C14-C20). The enzyme is involved in enhancing the hepatic fatty acid oxidation in mitochondria. This is Acyl-coenzyme A thioesterase 2, mitochondrial (Acot2) from Mus musculus (Mouse).